The following is a 499-amino-acid chain: C2H2-type transcription factor RPN4 (499 aa).

Residues 329–397 are disordered; sequence QTTKKDNSKP…TTKSTHTHSK (69 aa). The span at 331–344 shows a compositional bias: basic and acidic residues; that stretch reads TKKDNSKPVEKTVV. Residues 345-363 show a composition bias toward polar residues; sequence EKTSSVTKAGSNHSRSTLA. Residues 405 to 436 form a C2H2-type zinc finger; that stretch reads FVCELVNSVTNEVCGAQFSRTYDLTRHQNTIH.

The protein resides in the nucleus. Its function is as follows. Transcription factor that acts as a transcriptional activator of a number of genes encoding proteasomal subunits. Plays a role in ergosterol and plasma membrane homeostasis, and subsequent azole resistance. Regulates the expression of 212 genes, activating 80 genes and repressing, likely in an indirect fashion, 132 genes. Targets comprise several proteasome and ergosterol biosynthesis genes, including ERG1, ERG2, ERG3, and ERG11. Directly regulates ERG11 expression through the 3'-TTGCAAA-5' binding motif. The chain is C2H2-type transcription factor RPN4 from Candida glabrata (strain ATCC 2001 / BCRC 20586 / JCM 3761 / NBRC 0622 / NRRL Y-65 / CBS 138) (Yeast).